Reading from the N-terminus, the 130-residue chain is Small ribosomal subunit protein uS9 (130 aa).

Basic and acidic residues predominate over residues 105–115 (TRDSRQVERKK). The segment at 105–130 (TRDSRQVERKKVGFRKSRKRTQFSKR) is disordered. The span at 116–130 (VGFRKSRKRTQFSKR) shows a compositional bias: basic residues.

The protein belongs to the universal ribosomal protein uS9 family.

The chain is Small ribosomal subunit protein uS9 from Buchnera aphidicola subsp. Schizaphis graminum (strain Sg).